We begin with the raw amino-acid sequence, 320 residues long: Ribosomal RNA small subunit methyltransferase H (320 aa).

Residues 36-38 (GGH), D56, F82, D103, and Q110 each bind S-adenosyl-L-methionine.

It belongs to the methyltransferase superfamily. RsmH family.

It localises to the cytoplasm. It carries out the reaction cytidine(1402) in 16S rRNA + S-adenosyl-L-methionine = N(4)-methylcytidine(1402) in 16S rRNA + S-adenosyl-L-homocysteine + H(+). Specifically methylates the N4 position of cytidine in position 1402 (C1402) of 16S rRNA. In Chromobacterium violaceum (strain ATCC 12472 / DSM 30191 / JCM 1249 / CCUG 213 / NBRC 12614 / NCIMB 9131 / NCTC 9757 / MK), this protein is Ribosomal RNA small subunit methyltransferase H.